The primary structure comprises 277 residues: Uridine-cytidine kinase 1 (277 aa).

Residues 1–30 form a disordered region; the sequence is MASAGGGGSESAAPEADRPQPRPFLIGVSG. 30 to 38 serves as a coordination point for ATP; it reads GGTASGKST. Substrate-binding residues include aspartate 87, tyrosine 115, histidine 120, arginine 169, arginine 178, and glutamine 186. An ATP-binding site is contributed by aspartate 215. Basic residues predominate over residues 238–250; the sequence is RHRGGPNGRNHKR. The interval 238-277 is disordered; it reads RHRGGPNGRNHKRTFPEPGDHPGVLATGKRSHLESSSRPH. The residue at position 251 (threonine 251) is a Phosphothreonine. Over residues 268–277 the composition is skewed to basic and acidic residues; sequence SHLESSSRPH.

This sequence belongs to the uridine kinase family.

It catalyses the reaction uridine + ATP = UMP + ADP + H(+). It carries out the reaction cytidine + ATP = CMP + ADP + H(+). Its pathway is pyrimidine metabolism; CTP biosynthesis via salvage pathway; CTP from cytidine: step 1/3. It functions in the pathway pyrimidine metabolism; UMP biosynthesis via salvage pathway; UMP from uridine: step 1/1. Functionally, phosphorylates uridine and cytidine to uridine monophosphate and cytidine monophosphate. Does not phosphorylate deoxyribonucleosides or purine ribonucleosides. Can use ATP or GTP as a phosphate donor. The protein is Uridine-cytidine kinase 1 (Uck1) of Mus musculus (Mouse).